Here is a 729-residue protein sequence, read N- to C-terminus: Fatty acid oxidation complex subunit alpha (729 aa).

Residues 1–189 (MLYKGDTLYL…KIGLVDGVVA (189 aa)) are enoyl-CoA hydratase/isomerase. Asp-296 contacts substrate. Positions 311-729 (ETPKHAAVLG…ARPVGALKTA (419 aa)) are 3-hydroxyacyl-CoA dehydrogenase. NAD(+)-binding positions include Met-324, Asp-343, 400–402 (VVE), Lys-407, and Ser-429. The For 3-hydroxyacyl-CoA dehydrogenase activity role is filled by His-450. Asn-453 contributes to the NAD(+) binding site. Substrate-binding residues include Asn-500 and Tyr-660.

This sequence in the N-terminal section; belongs to the enoyl-CoA hydratase/isomerase family. In the C-terminal section; belongs to the 3-hydroxyacyl-CoA dehydrogenase family. As to quaternary structure, heterotetramer of two alpha chains (FadB) and two beta chains (FadA).

It catalyses the reaction a (3S)-3-hydroxyacyl-CoA + NAD(+) = a 3-oxoacyl-CoA + NADH + H(+). The catalysed reaction is a (3S)-3-hydroxyacyl-CoA = a (2E)-enoyl-CoA + H2O. It carries out the reaction a 4-saturated-(3S)-3-hydroxyacyl-CoA = a (3E)-enoyl-CoA + H2O. The enzyme catalyses (3S)-3-hydroxybutanoyl-CoA = (3R)-3-hydroxybutanoyl-CoA. It catalyses the reaction a (3Z)-enoyl-CoA = a 4-saturated (2E)-enoyl-CoA. The catalysed reaction is a (3E)-enoyl-CoA = a 4-saturated (2E)-enoyl-CoA. It participates in lipid metabolism; fatty acid beta-oxidation. Its function is as follows. Involved in the aerobic and anaerobic degradation of long-chain fatty acids via beta-oxidation cycle. Catalyzes the formation of 3-oxoacyl-CoA from enoyl-CoA via L-3-hydroxyacyl-CoA. It can also use D-3-hydroxyacyl-CoA and cis-3-enoyl-CoA as substrate. The chain is Fatty acid oxidation complex subunit alpha from Klebsiella pneumoniae (strain 342).